The following is a 247-amino-acid chain: 5'-nucleotidase SurE (247 aa).

Positions 8, 9, 39, and 91 each coordinate a divalent metal cation.

Belongs to the SurE nucleotidase family. It depends on a divalent metal cation as a cofactor.

The protein resides in the cytoplasm. It catalyses the reaction a ribonucleoside 5'-phosphate + H2O = a ribonucleoside + phosphate. Its function is as follows. Nucleotidase that shows phosphatase activity on nucleoside 5'-monophosphates. The chain is 5'-nucleotidase SurE from Azoarcus sp. (strain BH72).